We begin with the raw amino-acid sequence, 155 residues long: Ribosome maturation factor RimP (155 aa).

This sequence belongs to the RimP family.

Its subcellular location is the cytoplasm. Functionally, required for maturation of 30S ribosomal subunits. This is Ribosome maturation factor RimP from Staphylococcus haemolyticus (strain JCSC1435).